Reading from the N-terminus, the 185-residue chain is Ribosome-recycling factor (185 aa).

It belongs to the RRF family.

It localises to the cytoplasm. In terms of biological role, responsible for the release of ribosomes from messenger RNA at the termination of protein biosynthesis. May increase the efficiency of translation by recycling ribosomes from one round of translation to another. The chain is Ribosome-recycling factor from Edwardsiella ictaluri (strain 93-146).